A 250-amino-acid chain; its full sequence is MEEIKRLVLAMQFMTRLPIPIEIDVEKREFYRIASYFPIVGIVIGGILSLLYIALKDFFSREIVMTFIVAFSYVLTGAMHIDGLADTFDGLFSNKDKSKMLEIMRDSRLGTNGVLAAIFIVVLKILFLTNIHENITLTALLITPIIGRLSIVFSMMISKSARGGEGLGGLMLGKVGIREFAIAFVISIATSYFILPLAVFVKILTISLFVTYIVSKYISLRIGGMTGDTLGAVNELAELTALICFVSVSL.

6 helical membrane-spanning segments follow: residues 33–53, 63–83, 109–129, 137–157, 180–200, and 203–223; these read IASY…LLYI, IVMT…HIDG, LGTN…LFLT, LTAL…SMMI, FAIA…LAVF, and ILTI…LRIG.

Belongs to the CobS family. Mg(2+) serves as cofactor.

It is found in the cell membrane. The catalysed reaction is alpha-ribazole + adenosylcob(III)inamide-GDP = adenosylcob(III)alamin + GMP + H(+). It catalyses the reaction alpha-ribazole 5'-phosphate + adenosylcob(III)inamide-GDP = adenosylcob(III)alamin 5'-phosphate + GMP + H(+). It functions in the pathway cofactor biosynthesis; adenosylcobalamin biosynthesis; adenosylcobalamin from cob(II)yrinate a,c-diamide: step 7/7. In terms of biological role, joins adenosylcobinamide-GDP and alpha-ribazole to generate adenosylcobalamin (Ado-cobalamin). Also synthesizes adenosylcobalamin 5'-phosphate from adenosylcobinamide-GDP and alpha-ribazole 5'-phosphate. The sequence is that of Adenosylcobinamide-GDP ribazoletransferase from Thermoanaerobacter pseudethanolicus (strain ATCC 33223 / 39E) (Clostridium thermohydrosulfuricum).